The chain runs to 483 residues: NADH-quinone oxidoreductase subunit N (483 aa).

13 consecutive transmembrane segments (helical) span residues proline 13–phenylalanine 33, glycine 45–valine 65, phenylalanine 80–isoleucine 100, proline 111–isoleucine 131, phenylalanine 165–phenylalanine 185, isoleucine 205–valine 225, alanine 244–valine 264, isoleucine 276–serine 296, leucine 301–threonine 321, valine 328–alanine 348, alanine 373–phenylalanine 393, leucine 407–valine 429, and valine 452–leucine 472.

It belongs to the complex I subunit 2 family. NDH-1 is composed of 14 different subunits. Subunits NuoA, H, J, K, L, M, N constitute the membrane sector of the complex.

Its subcellular location is the cell inner membrane. The enzyme catalyses a quinone + NADH + 5 H(+)(in) = a quinol + NAD(+) + 4 H(+)(out). Functionally, NDH-1 shuttles electrons from NADH, via FMN and iron-sulfur (Fe-S) centers, to quinones in the respiratory chain. The immediate electron acceptor for the enzyme in this species is believed to be ubiquinone. Couples the redox reaction to proton translocation (for every two electrons transferred, four hydrogen ions are translocated across the cytoplasmic membrane), and thus conserves the redox energy in a proton gradient. The sequence is that of NADH-quinone oxidoreductase subunit N from Parvibaculum lavamentivorans (strain DS-1 / DSM 13023 / NCIMB 13966).